The chain runs to 374 residues: Ribosomal RNA large subunit methyltransferase G (374 aa).

Belongs to the methyltransferase superfamily. RlmG family.

It is found in the cytoplasm. It carries out the reaction guanosine(1835) in 23S rRNA + S-adenosyl-L-methionine = N(2)-methylguanosine(1835) in 23S rRNA + S-adenosyl-L-homocysteine + H(+). Specifically methylates the guanine in position 1835 (m2G1835) of 23S rRNA. This Pseudomonas aeruginosa (strain ATCC 15692 / DSM 22644 / CIP 104116 / JCM 14847 / LMG 12228 / 1C / PRS 101 / PAO1) protein is Ribosomal RNA large subunit methyltransferase G.